An 89-amino-acid chain; its full sequence is Acylphosphatase (89 aa).

Residues 3–89 (RMTAWVHGFV…RGDLTGFVER (87 aa)) enclose the Acylphosphatase-like domain. Catalysis depends on residues Arg18 and Asn36.

The protein belongs to the acylphosphatase family.

It carries out the reaction an acyl phosphate + H2O = a carboxylate + phosphate + H(+). In Rhodococcus jostii (strain RHA1), this protein is Acylphosphatase (acyP).